We begin with the raw amino-acid sequence, 400 residues long: Deoxyguanosinetriphosphate triphosphohydrolase-like protein (400 aa).

In terms of domain architecture, HD spans 73–215 (RLTHSIEVSQ…AAIADDIAYN (143 aa)).

It belongs to the dGTPase family. Type 2 subfamily.

This chain is Deoxyguanosinetriphosphate triphosphohydrolase-like protein, found in Bartonella tribocorum (strain CIP 105476 / IBS 506).